A 386-amino-acid chain; its full sequence is Lycopene beta-cyclase (386 aa).

Position 3-33 (3-33 (DLILVGGGLANGLIAWRLRQRYPQLNLLLIE)) interacts with NAD(+).

This sequence belongs to the lycopene cyclase family. Requires FAD as cofactor.

It catalyses the reaction a carotenoid psi-end group = a carotenoid beta-end derivative. The enzyme catalyses all-trans-lycopene = gamma-carotene. It carries out the reaction gamma-carotene = all-trans-beta-carotene. It functions in the pathway carotenoid biosynthesis; beta-carotene biosynthesis. Functionally, catalyzes the double cyclization reaction which converts lycopene to beta-carotene. This Pseudescherichia vulneris (Escherichia vulneris) protein is Lycopene beta-cyclase.